Consider the following 932-residue polypeptide: 2-oxoglutarate dehydrogenase E1 component (932 aa).

Belongs to the alpha-ketoglutarate dehydrogenase family. In terms of assembly, homodimer. Part of the 2-oxoglutarate dehydrogenase (OGDH) complex composed of E1 (2-oxoglutarate dehydrogenase), E2 (dihydrolipoamide succinyltransferase) and E3 (dihydrolipoamide dehydrogenase); the complex contains multiple copies of the three enzymatic components (E1, E2 and E3). It depends on thiamine diphosphate as a cofactor.

The enzyme catalyses N(6)-[(R)-lipoyl]-L-lysyl-[protein] + 2-oxoglutarate + H(+) = N(6)-[(R)-S(8)-succinyldihydrolipoyl]-L-lysyl-[protein] + CO2. In terms of biological role, E1 component of the 2-oxoglutarate dehydrogenase (OGDH) complex which catalyzes the decarboxylation of 2-oxoglutarate, the first step in the conversion of 2-oxoglutarate to succinyl-CoA and CO(2). In Staphylococcus aureus (strain JH9), this protein is 2-oxoglutarate dehydrogenase E1 component.